The primary structure comprises 125 residues: Large ribosomal subunit protein eL22 (125 aa).

This sequence belongs to the eukaryotic ribosomal protein eL22 family. Component of the large ribosomal subunit.

It is found in the cytoplasm. Component of the large ribosomal subunit. The ribosome is a large ribonucleoprotein complex responsible for the synthesis of proteins in the cell. This is Large ribosomal subunit protein eL22 (rpl22) from Gadus morhua (Atlantic cod).